The sequence spans 347 residues: Phosphoribosylformylglycinamidine cyclo-ligase (347 aa).

Belongs to the AIR synthase family.

It is found in the cytoplasm. It catalyses the reaction 2-formamido-N(1)-(5-O-phospho-beta-D-ribosyl)acetamidine + ATP = 5-amino-1-(5-phospho-beta-D-ribosyl)imidazole + ADP + phosphate + H(+). It functions in the pathway purine metabolism; IMP biosynthesis via de novo pathway; 5-amino-1-(5-phospho-D-ribosyl)imidazole from N(2)-formyl-N(1)-(5-phospho-D-ribosyl)glycinamide: step 2/2. This Yersinia enterocolitica serotype O:8 / biotype 1B (strain NCTC 13174 / 8081) protein is Phosphoribosylformylglycinamidine cyclo-ligase.